Consider the following 167-residue polypeptide: Small ribosomal subunit protein uS3m (167 aa).

The N-terminal 35 residues, 1–35 (MAWSASVRGLGQRVLACSRELPGAWRTLHTSAVCA), are a transit peptide targeting the mitochondrion.

The protein belongs to the universal ribosomal protein uS3 family. Component of the mitochondrial ribosome small subunit (28S) which comprises a 12S rRNA and about 30 distinct proteins.

The protein localises to the mitochondrion. This is Small ribosomal subunit protein uS3m (Mrps24) from Mus musculus (Mouse).